A 167-amino-acid chain; its full sequence is MEHSRCLSCLILAALLSQVNPRALEVLEAEDKVILKCNSSITLLQGTAGQEVSDNKTLNLGKRIEDPRGMYQCGENAKSFTLQVYYRMCQNCVELDSATLAGLIITDIIATVLLALGVYCFAGHETGRFSRAADTQVLMGNDQLYQPLRERNDAQYSRLGDKWARNK.

The first 21 residues, 1 to 21, serve as a signal peptide directing secretion; sequence MEHSRCLSCLILAALLSQVNP. Over 22–100 the chain is Extracellular; that stretch reads RALEVLEAED…NCVELDSATL (79 aa). Cys-37 and Cys-73 form a disulfide bridge. 2 N-linked (GlcNAc...) asparagine glycosylation sites follow: Asn-38 and Asn-55. A helical membrane pass occupies residues 101–121; sequence AGLIITDIIATVLLALGVYCF. Topologically, residues 122-167 are cytoplasmic; that stretch reads AGHETGRFSRAADTQVLMGNDQLYQPLRERNDAQYSRLGDKWARNK. The region spanning 134–162 is the ITAM domain; it reads DTQVLMGNDQLYQPLRERNDAQYSRLGDK. Phosphotyrosine occurs at positions 145 and 156.

The TCR-CD3 complex is composed of a CD3D/CD3E and a CD3G/CD3E heterodimers that preferentially associate with TCRalpha and TCRbeta, respectively, to form TCRalpha/CD3E/CD3G and TCRbeta/CD3G/CD3E trimers. In turn, the hexamer interacts with CD3Z homodimer to form the TCR-CD3 complex. Alternatively, TCRalpha and TCRbeta can be replaced by TCRgamma and TCRdelta. Interacts with coreceptors CD4 and CD8. Phosphorylated on Tyr residues after T-cell receptor triggering by LCK in association with CD4/CD8. In terms of tissue distribution, CD3D is mostly present on T-lymphocytes with its TCR-CD3 partners. Present also in fetal NK-cells.

It localises to the cell membrane. Functionally, part of the TCR-CD3 complex present on T-lymphocyte cell surface that plays an essential role in adaptive immune response. When antigen presenting cells (APCs) activate T-cell receptor (TCR), TCR-mediated signals are transmitted across the cell membrane by the CD3 chains CD3D, CD3E, CD3G and CD3Z. All CD3 chains contain immunoreceptor tyrosine-based activation motifs (ITAMs) in their cytoplasmic domain. Upon TCR engagement, these motifs become phosphorylated by Src family protein tyrosine kinases LCK and FYN, resulting in the activation of downstream signaling pathways. In addition of this role of signal transduction in T-cell activation, CD3D plays an essential role in thymocyte differentiation. Indeed, participates in correct intracellular TCR-CD3 complex assembly and surface expression. In absence of a functional TCR-CD3 complex, thymocytes are unable to differentiate properly. Interacts with CD4 and CD8 and thus serves to establish a functional link between the TCR and coreceptors CD4 and CD8, which is needed for activation and positive selection of CD4 or CD8 T-cells. This chain is T-cell surface glycoprotein CD3 delta chain (CD3D), found in Ovis aries (Sheep).